The chain runs to 157 residues: Probable Brix domain-containing ribosomal biogenesis protein (157 aa).

The Brix domain occupies 1–157; sequence MLVTSSRKPS…KLNLRGFKKY (157 aa).

Functionally, probably involved in the biogenesis of the ribosome. The chain is Probable Brix domain-containing ribosomal biogenesis protein from Methanosarcina barkeri (strain Fusaro / DSM 804).